The following is a 273-amino-acid chain: Structural protein ORF273 (273 aa).

The protein localises to the virion. This chain is Structural protein ORF273, found in Acidianus convivator (ATV).